A 170-amino-acid chain; its full sequence is Small capsomere-interacting protein (170 aa).

A compositionally biased stretch (basic and acidic residues) spans 76–88; sequence TLRDQKPRERADR. A disordered region spans residues 76-170; the sequence is TLRDQKPRER…ARKPPSGKKK (95 aa). Residues 110–139 show a composition bias toward polar residues; that stretch reads SGTTPGGQDSLGVSGSSITTLSSGPHSLSP. Residues 144–155 show a composition bias toward low complexity; the sequence is LTTLSSTTETAA.

It belongs to the herpesviridae small capsomere-interacting protein family. In terms of assembly, interacts with the major capsid protein/MCP.

It localises to the virion. The protein resides in the host nucleus. Its function is as follows. Participates in the assembly of the infectious particles by decorating the outer surface of the capsid shell and thus forming a layer between the capsid and the tegument. Complexes composed of the major capsid protein and small capsomere-interacting protein/SCP assemble together in the host cytoplasm and are translocated to the nucleus, where they accumulate and participate in capsid assembly. The protein is Small capsomere-interacting protein of Homo sapiens (Human).